The sequence spans 224 residues: MNYFRYKQFNKDVITVAVGYYLRYTLSYRDISEILRERGVNVHHSTVYRWVQEYAPILYQIWKKKHKKAYYKWRIDETYIKIKGKWSYLYRAIDAEGHTLDIWLRKQRDNHSAYAFIKRLIKQFGKPQKVITDQAPSTKVAMAKVIKAFKLKPDCHCTSKYLNNLIEQDHRHIKVRKTRYQSINTAKNTLKGIECIYALYKKNRRSLQIYGFSPCHEISIMLAS.

A DNA-binding region (H-T-H motif) is located at residues 33-52; the sequence is EILRERGVNVHHSTVYRWVQ. The 150-residue stretch at 73–222 folds into the Integrase catalytic domain; the sequence is WRIDETYIKI…SPCHEISIML (150 aa).

Involved in the transposition of the insertion sequence. The protein is Transposase for insertion sequence-like element IS431mec (tnp) of Staphylococcus aureus (strain NCTC 8325 / PS 47).